The sequence spans 611 residues: MFS siderochrome iron transporter C (611 aa).

Residues 1–25 (MPFLDHRTGPSYGTIDQMEQHSDDE) form a disordered region. N-linked (GlcNAc...) asparagine glycosylation is present at asparagine 62. Transmembrane regions (helical) follow at residues 71 to 91 (VIAYVSIFLMSFCTSLEGQTV), 107 to 127 (LISTVLVVQNVVNAVIKPPMA), 136 to 156 (FEAFCVSILIYVLGYIQMAAS), 165 to 185 (AQIFYSAGSTGLQILQQVFIA), 194 to 214 (AFLALLPEFPFLVTVWIGPTI), 228 to 248 (YGMWSIILPASFLPLALSLLL), 282 to 302 (MGGLILLSAAVTLILVPLTLA), 313 to 333 (SIVAMIVVGLFCLIALPFWES), 353 to 373 (ALAGCTLAFWYFMAFYFSVQP), 393 to 413 (VTQTFAFTSTIAAFAVSILIK), 418 to 438 (YRAFVIAGCVVYIIGMVLMMV), 449 to 469 (ILVTQVVVGIGGGLLNVPVQL), 486 to 506 (MFLTSMEMGGAVGAALSGAVW), and 560 to 580 (LLILALIAIIPLVPLSLAMED). The disordered stretch occupies residues 592 to 611 (VDPVPAEEGEIEPNRHVKRT).

The protein belongs to the major facilitator superfamily.

Its subcellular location is the membrane. Its function is as follows. Major facilitator transporter that contributes to the maintenance of intracellular siderophore ferricrocin (FC) levels. Plays a role in conidiation and confers protection against oxidative stress. Also contributes to fungal virulence in the Galleria mellonella animal model system. Does not appear to play a role in either siderophore export or uptake. The chain is MFS siderochrome iron transporter C from Aspergillus fumigatus (strain ATCC MYA-4609 / CBS 101355 / FGSC A1100 / Af293) (Neosartorya fumigata).